The chain runs to 254 residues: Probable transcriptional regulatory protein Cyan7425_4347 (254 aa).

The protein belongs to the TACO1 family.

It localises to the cytoplasm. This is Probable transcriptional regulatory protein Cyan7425_4347 from Cyanothece sp. (strain PCC 7425 / ATCC 29141).